A 287-amino-acid chain; its full sequence is Ribosomal RNA small subunit methyltransferase A (287 aa).

S-adenosyl-L-methionine-binding residues include N28, L30, G55, E77, D103, and N123.

This sequence belongs to the class I-like SAM-binding methyltransferase superfamily. rRNA adenine N(6)-methyltransferase family. RsmA subfamily.

The protein localises to the cytoplasm. The enzyme catalyses adenosine(1518)/adenosine(1519) in 16S rRNA + 4 S-adenosyl-L-methionine = N(6)-dimethyladenosine(1518)/N(6)-dimethyladenosine(1519) in 16S rRNA + 4 S-adenosyl-L-homocysteine + 4 H(+). Its function is as follows. Specifically dimethylates two adjacent adenosines (A1518 and A1519) in the loop of a conserved hairpin near the 3'-end of 16S rRNA in the 30S particle. May play a critical role in biogenesis of 30S subunits. This Rhodopseudomonas palustris (strain TIE-1) protein is Ribosomal RNA small subunit methyltransferase A.